The primary structure comprises 283 residues: GTP cyclohydrolase MptA (283 aa).

This sequence belongs to the GTP cyclohydrolase IV family. In terms of assembly, homodimer. Fe(2+) is required as a cofactor.

It carries out the reaction GTP + H2O = 7,8-dihydroneopterin 2',3'-cyclic phosphate + formate + diphosphate + H(+). The protein operates within cofactor biosynthesis; 5,6,7,8-tetrahydromethanopterin biosynthesis. Converts GTP to 7,8-dihydro-D-neopterin 2',3'-cyclic phosphate, the first intermediate in the biosynthesis of coenzyme methanopterin. In Aeropyrum pernix (strain ATCC 700893 / DSM 11879 / JCM 9820 / NBRC 100138 / K1), this protein is GTP cyclohydrolase MptA.